An 857-amino-acid chain; its full sequence is Leucine--tRNA ligase (857 aa).

The 'HIGH' region motif lies at 42-52 (PYPSGKLHMGH). Residues 620-624 (KMSKS) carry the 'KMSKS' region motif. Lys-623 provides a ligand contact to ATP.

Belongs to the class-I aminoacyl-tRNA synthetase family.

The protein localises to the cytoplasm. The catalysed reaction is tRNA(Leu) + L-leucine + ATP = L-leucyl-tRNA(Leu) + AMP + diphosphate. In Thiobacillus denitrificans (strain ATCC 25259 / T1), this protein is Leucine--tRNA ligase.